The primary structure comprises 450 residues: Enolase (450 aa).

Residue Gln-173 coordinates (2R)-2-phosphoglycerate. The Proton donor role is filled by Glu-215. 3 residues coordinate Mg(2+): Asp-254, Glu-308, and Asp-335. Positions 360, 389, 390, and 411 each coordinate (2R)-2-phosphoglycerate. Lys-360 functions as the Proton acceptor in the catalytic mechanism.

The protein belongs to the enolase family. It depends on Mg(2+) as a cofactor.

It is found in the cytoplasm. The protein resides in the secreted. The protein localises to the cell surface. The catalysed reaction is (2R)-2-phosphoglycerate = phosphoenolpyruvate + H2O. It participates in carbohydrate degradation; glycolysis; pyruvate from D-glyceraldehyde 3-phosphate: step 4/5. In terms of biological role, catalyzes the reversible conversion of 2-phosphoglycerate (2-PG) into phosphoenolpyruvate (PEP). It is essential for the degradation of carbohydrates via glycolysis. The sequence is that of Enolase from Malacoplasma penetrans (strain HF-2) (Mycoplasma penetrans).